Reading from the N-terminus, the 360-residue chain is Phospho-N-acetylmuramoyl-pentapeptide-transferase (360 aa).

10 helical membrane passes run 18–38 (VFSY…FISL), 73–93 (TMGG…WADL), 94–114 (SNIY…VGFV), 134–154 (YFWQ…IAQG), 168–188 (LLPQ…VGTS), 199–219 (GLAI…AYVT), 239–259 (LVIV…FNTY), 263–283 (VFMG…IAIL), 288–308 (LVLF…ILQV), and 338–358 (VIVR…ATLK).

This sequence belongs to the glycosyltransferase 4 family. MraY subfamily. Requires Mg(2+) as cofactor.

It localises to the cell inner membrane. The catalysed reaction is UDP-N-acetyl-alpha-D-muramoyl-L-alanyl-gamma-D-glutamyl-meso-2,6-diaminopimeloyl-D-alanyl-D-alanine + di-trans,octa-cis-undecaprenyl phosphate = di-trans,octa-cis-undecaprenyl diphospho-N-acetyl-alpha-D-muramoyl-L-alanyl-D-glutamyl-meso-2,6-diaminopimeloyl-D-alanyl-D-alanine + UMP. The protein operates within cell wall biogenesis; peptidoglycan biosynthesis. Functionally, catalyzes the initial step of the lipid cycle reactions in the biosynthesis of the cell wall peptidoglycan: transfers peptidoglycan precursor phospho-MurNAc-pentapeptide from UDP-MurNAc-pentapeptide onto the lipid carrier undecaprenyl phosphate, yielding undecaprenyl-pyrophosphoryl-MurNAc-pentapeptide, known as lipid I. This Colwellia psychrerythraea (strain 34H / ATCC BAA-681) (Vibrio psychroerythus) protein is Phospho-N-acetylmuramoyl-pentapeptide-transferase.